The chain runs to 163 residues: ATP synthase subunit b 2 (163 aa).

The helical transmembrane segment at 5–25 threads the bilayer; the sequence is SLATLWATIALIIFLGVAIYI.

This sequence belongs to the ATPase B chain family. In terms of assembly, F-type ATPases have 2 components, F(1) - the catalytic core - and F(0) - the membrane proton channel. F(1) has five subunits: alpha(3), beta(3), gamma(1), delta(1), epsilon(1). F(0) has three main subunits: a(1), b(2) and c(10-14). The alpha and beta chains form an alternating ring which encloses part of the gamma chain. F(1) is attached to F(0) by a central stalk formed by the gamma and epsilon chains, while a peripheral stalk is formed by the delta and b chains.

It is found in the cell inner membrane. Its function is as follows. F(1)F(0) ATP synthase produces ATP from ADP in the presence of a proton or sodium gradient. F-type ATPases consist of two structural domains, F(1) containing the extramembraneous catalytic core and F(0) containing the membrane proton channel, linked together by a central stalk and a peripheral stalk. During catalysis, ATP synthesis in the catalytic domain of F(1) is coupled via a rotary mechanism of the central stalk subunits to proton translocation. Functionally, component of the F(0) channel, it forms part of the peripheral stalk, linking F(1) to F(0). This Mesorhizobium japonicum (strain LMG 29417 / CECT 9101 / MAFF 303099) (Mesorhizobium loti (strain MAFF 303099)) protein is ATP synthase subunit b 2.